A 339-amino-acid polypeptide reads, in one-letter code: Tetraacyldisaccharide 4'-kinase (339 aa).

Residue 62 to 69 (VAGGTGKT) participates in ATP binding.

It belongs to the LpxK family.

It catalyses the reaction a lipid A disaccharide + ATP = a lipid IVA + ADP + H(+). The protein operates within glycolipid biosynthesis; lipid IV(A) biosynthesis; lipid IV(A) from (3R)-3-hydroxytetradecanoyl-[acyl-carrier-protein] and UDP-N-acetyl-alpha-D-glucosamine: step 6/6. Transfers the gamma-phosphate of ATP to the 4'-position of a tetraacyldisaccharide 1-phosphate intermediate (termed DS-1-P) to form tetraacyldisaccharide 1,4'-bis-phosphate (lipid IVA). The chain is Tetraacyldisaccharide 4'-kinase from Xylella fastidiosa (strain 9a5c).